A 139-amino-acid polypeptide reads, in one-letter code: Probable disulfide formation protein C 1 (139 aa).

Residues 8 to 27 traverse the membrane as a helical segment; sequence EYALFTAWGASFIATLGSLY. Residues Cys37 and Cys40 are joined by a disulfide bond. 2 helical membrane-spanning segments follow: residues 42–61 and 68–85; these read YQRIFMYPFVLWLGIAVVKK and YSLPIASIGACISLYHYV. Cys99 and Cys104 are oxidised to a cystine. A helical transmembrane segment spans residues 113–135; it reads GFVTIPFLALIGFITIAVCSFIV.

Belongs to the DsbB family. BdbC subfamily.

Its subcellular location is the cell membrane. Its function is as follows. Required for disulfide bond formation in some proteins. This Bacillus anthracis protein is Probable disulfide formation protein C 1 (bdbC1).